The chain runs to 581 residues: Arginine--tRNA ligase (581 aa).

A 'HIGH' region motif is present at residues 126-136 (PNLAKEMHVGH).

This sequence belongs to the class-I aminoacyl-tRNA synthetase family. Monomer.

The protein localises to the cytoplasm. It carries out the reaction tRNA(Arg) + L-arginine + ATP = L-arginyl-tRNA(Arg) + AMP + diphosphate. In Shewanella baltica (strain OS223), this protein is Arginine--tRNA ligase.